Reading from the N-terminus, the 202-residue chain is uncharacterized protein (202 aa).

The first 19 residues, 1-19, serve as a signal peptide directing secretion; that stretch reads MRRKNGFSVASVFILCSIA. The helical transmembrane segment at 177-199 threads the bilayer; sequence FLASSSSSFSSFLPSIAIILFFV.

It localises to the membrane. This is an uncharacterized protein from Caenorhabditis elegans.